The chain runs to 342 residues: L-threonine 3-dehydrogenase (342 aa).

Zn(2+) is bound at residue C38. Catalysis depends on charge relay system residues T40 and H43. Residues H63, E64, C93, C96, C99, and C107 each contribute to the Zn(2+) site. NAD(+)-binding positions include I175, D195, R200, 262–264 (LGL), and 286–287 (IY).

This sequence belongs to the zinc-containing alcohol dehydrogenase family. In terms of assembly, homotetramer. Zn(2+) serves as cofactor.

It is found in the cytoplasm. The enzyme catalyses L-threonine + NAD(+) = (2S)-2-amino-3-oxobutanoate + NADH + H(+). Its pathway is amino-acid degradation; L-threonine degradation via oxydo-reductase pathway; glycine from L-threonine: step 1/2. Functionally, catalyzes the NAD(+)-dependent oxidation of L-threonine to 2-amino-3-ketobutyrate. In Streptomyces coelicolor (strain ATCC BAA-471 / A3(2) / M145), this protein is L-threonine 3-dehydrogenase.